The chain runs to 352 residues: Diacylglycerol acyltransferase/mycolyltransferase Ag85C (352 aa).

The N-terminal stretch at 1-37 (MSFIEKVRKLRGAAATMPRRLAIAAVGASLLSGVAVA) is a signal peptide. A substrate-binding site is contributed by 86–87 (LR). A fibronectin-binding region spans residues 102-112 (FEEFYQSGLSV). Ser-170 and Asn-198 together coordinate substrate. Ser-170 serves as the catalytic Nucleophile. The active site involves Glu-274. Residues 276-279 (LTLR) and 306-308 (HSW) each bind substrate. The active site involves His-306. A disordered region spans residues 332 to 352 (TAAPAQPAQPAQPAQPAQPAT). Residues 333–352 (AAPAQPAQPAQPAQPAQPAT) show a composition bias toward low complexity.

It belongs to the mycobacterial A85 antigen family. Homodimer.

It localises to the secreted. It catalyses the reaction an acyl-CoA + a 1,2-diacyl-sn-glycerol = a triacyl-sn-glycerol + CoA. The enzyme catalyses 2 alpha,alpha'-trehalose 6-mycolate = alpha,alpha'-trehalose 6,6'-bismycolate + alpha,alpha-trehalose. In terms of biological role, the antigen 85 proteins (FbpA, FbpB, FbpC) are responsible for the high affinity of mycobacteria to fibronectin, a large adhesive glycoprotein, which facilitates the attachment of M.tuberculosis to murine alveolar macrophages (AMs). They also help to maintain the integrity of the cell wall by catalyzing the transfer of mycolic acids to cell wall arabinogalactan and through the synthesis of alpha,alpha-trehalose dimycolate (TDM, cord factor). They catalyze the transfer of a mycoloyl residue from one molecule of alpha,alpha-trehalose monomycolate (TMM) to another TMM, leading to the formation of TDM. This is Diacylglycerol acyltransferase/mycolyltransferase Ag85C (fbpC) from Mycobacterium avium.